We begin with the raw amino-acid sequence, 216 residues long: Redox-sensing transcriptional repressor Rex (216 aa).

The H-T-H motif DNA-binding region spans Ile17–Phe56. Gly91–Gly96 lines the NAD(+) pocket.

The protein belongs to the transcriptional regulatory Rex family. As to quaternary structure, homodimer.

The protein resides in the cytoplasm. In terms of biological role, modulates transcription in response to changes in cellular NADH/NAD(+) redox state. This chain is Redox-sensing transcriptional repressor Rex, found in Leuconostoc citreum (strain KM20).